A 337-amino-acid chain; its full sequence is Anthranilate phosphoribosyltransferase (337 aa).

5-phospho-alpha-D-ribose 1-diphosphate-binding positions include glycine 81, 84-85 (GD), serine 89, 91-94 (NVST), 109-117 (KHGNRALSS), and alanine 121. Residue glycine 81 coordinates anthranilate. Residue serine 93 participates in Mg(2+) binding. An anthranilate-binding site is contributed by asparagine 112. Arginine 167 is an anthranilate binding site. 2 residues coordinate Mg(2+): aspartate 226 and glutamate 227.

This sequence belongs to the anthranilate phosphoribosyltransferase family. In terms of assembly, homodimer. Mg(2+) serves as cofactor.

The catalysed reaction is N-(5-phospho-beta-D-ribosyl)anthranilate + diphosphate = 5-phospho-alpha-D-ribose 1-diphosphate + anthranilate. It functions in the pathway amino-acid biosynthesis; L-tryptophan biosynthesis; L-tryptophan from chorismate: step 2/5. Functionally, catalyzes the transfer of the phosphoribosyl group of 5-phosphorylribose-1-pyrophosphate (PRPP) to anthranilate to yield N-(5'-phosphoribosyl)-anthranilate (PRA). The protein is Anthranilate phosphoribosyltransferase of Bradyrhizobium sp. (strain BTAi1 / ATCC BAA-1182).